Consider the following 108-residue polypeptide: Cell wall protein PGA48 (108 aa).

A signal peptide spans 1 to 17 (MFKFVIYLFTFIAFANA). N-linked (GlcNAc...) asparagine glycosylation is found at Asn18, Asn41, and Asn77. Asn84 is lipidated: GPI-anchor amidated asparagine. Positions 85-108 (GASKLNLRSLAGAGLVAAIFIAFI) are cleaved as a propeptide — removed in mature form.

This sequence belongs to the SED1 family. In terms of processing, the GPI-anchor is attached to the protein in the endoplasmic reticulum and serves to target the protein to the cell surface. There, the glucosamine-inositol phospholipid moiety is cleaved off and the GPI-modified mannoprotein is covalently attached via its lipidless GPI glycan remnant to the 1,6-beta-glucan of the outer cell wall layer.

The protein resides in the secreted. It localises to the cell wall. Its subcellular location is the membrane. Its function is as follows. Cell wall protein that plays a role in adaptation and resistance to cell wall stress. This chain is Cell wall protein PGA48 (PGA48), found in Candida albicans (strain SC5314 / ATCC MYA-2876) (Yeast).